The sequence spans 68 residues: U1-agatoxin-Ta1c (68 aa).

An N-terminal signal peptide occupies residues 1–17 (MKLQLMICLVLLPCFFC). 3 cysteine pairs are disulfide-bonded: C23–C53, C39–C49, and C42–C62. K67 carries the post-translational modification Lysine amide.

Belongs to the helical arthropod-neuropeptide-derived (HAND) family. Expressed by the venom gland.

The protein localises to the secreted. Its function is as follows. Toxin that paralyzes insects. May have a direct effect on the insect central nervous system. In Eratigena agrestis (Hobo spider), this protein is U1-agatoxin-Ta1c.